Reading from the N-terminus, the 317-residue chain is Olfactory receptor 2F2 (317 aa).

At 1–25 the chain is on the extracellular side; sequence MEIDNQTWVREFILLGLSSDWCTQI. N-linked (GlcNAc...) asparagine glycosylation is present at Asn5. A helical transmembrane segment spans residues 26-49; the sequence is SLFSLFLVTYLMTVLGNCLIVLLI. The Cytoplasmic segment spans residues 50–57; that stretch reads RLDSRLHT. Residues 58–79 form a helical membrane-spanning segment; that stretch reads PMYFFLTNLSLVDVSYATSVVP. At 80 to 100 the chain is on the extracellular side; the sequence is QLLAHFLAEHKAIPFQSCAAQ. Cys97 and Cys189 form a disulfide bridge. The helical transmembrane segment at 101-120 threads the bilayer; that stretch reads LFFSLALGGIEFVLLAVMAY. The Cytoplasmic portion of the chain corresponds to 121-139; the sequence is DRHVAVSDRLRYSAIMHGG. Residues 140-158 form a helical membrane-spanning segment; that stretch reads LCARLAITSWVSGSINSLV. Residues 159–195 are Extracellular-facing; sequence QTAITFQLPMCTNKFIDHISCELLAVVRLACVDTSSN. Residues 196-219 form a helical membrane-spanning segment; it reads EAAIMVSSIVLLMTPFCLVLLSYI. Residues 220-236 are Cytoplasmic-facing; sequence RIISTILKIQSREGRKK. Residues 237–259 traverse the membrane as a helical segment; that stretch reads AFHTCASHLTVVALCYGTTIFTY. The Extracellular portion of the chain corresponds to 260 to 272; it reads IQPHSGPSVLQEK. Residues 273-292 form a helical membrane-spanning segment; the sequence is LISVFYAIVMPLLNPVIYSL. Topologically, residues 293–317 are cytoplasmic; sequence RNKEVKGAWHKLLEKFSGLTSKLGT.

It belongs to the G-protein coupled receptor 1 family.

The protein localises to the cell membrane. Its function is as follows. Odorant receptor. The protein is Olfactory receptor 2F2 (OR2F2) of Homo sapiens (Human).